We begin with the raw amino-acid sequence, 157 residues long: Lipoprotein signal peptidase (157 aa).

The next 4 helical transmembrane spans lie at 10–30 (LVFMGGFFLIFGVDQAIKYAI), 38–58 (SLMVDIVLVFNKGVAFSLLSF), 59–79 (LEGGLKYLQILLILGLFIFLI), and 84–104 (LFKTHAIEFGMVFGAGVSNVL). Residues Asp-114 and Asp-131 contribute to the active site. Residues 122-142 (FDFAIFNFADVMIDVGVGVLL) traverse the membrane as a helical segment.

The protein belongs to the peptidase A8 family.

The protein localises to the cell inner membrane. It catalyses the reaction Release of signal peptides from bacterial membrane prolipoproteins. Hydrolyzes -Xaa-Yaa-Zaa-|-(S,diacylglyceryl)Cys-, in which Xaa is hydrophobic (preferably Leu), and Yaa (Ala or Ser) and Zaa (Gly or Ala) have small, neutral side chains.. It participates in protein modification; lipoprotein biosynthesis (signal peptide cleavage). In terms of biological role, this protein specifically catalyzes the removal of signal peptides from prolipoproteins. The sequence is that of Lipoprotein signal peptidase from Helicobacter pylori (strain HPAG1).